The chain runs to 398 residues: Enoyl-[acyl-carrier-protein] reductase [NADH] (398 aa).

NAD(+)-binding positions include glycine 48 to tyrosine 53, phenylalanine 74 to glutamate 75, aspartate 111 to alanine 112, and leucine 139 to alanine 140. Residue tyrosine 225 coordinates substrate. Residue tyrosine 235 is the Proton donor of the active site. NAD(+) is bound by residues lysine 244 and valine 273–threonine 275.

The protein belongs to the TER reductase family. As to quaternary structure, monomer.

The catalysed reaction is a 2,3-saturated acyl-[ACP] + NAD(+) = a (2E)-enoyl-[ACP] + NADH + H(+). It functions in the pathway lipid metabolism; fatty acid biosynthesis. Involved in the final reduction of the elongation cycle of fatty acid synthesis (FAS II). Catalyzes the reduction of a carbon-carbon double bond in an enoyl moiety that is covalently linked to an acyl carrier protein (ACP). The protein is Enoyl-[acyl-carrier-protein] reductase [NADH] of Pseudomonas aeruginosa (strain UCBPP-PA14).